Here is a 136-residue protein sequence, read N- to C-terminus: SPbeta prophage-derived uncharacterized protein YonI (136 aa).

In Bacillus subtilis (strain 168), this protein is SPbeta prophage-derived uncharacterized protein YonI (yonI).